The chain runs to 259 residues: Adenylate kinase (259 aa).

An ATP-binding site is contributed by 52-57; the sequence is GAGKGT. The segment at 72 to 101 is NMP; sequence ATGDMLRSQVAKKTDLGREAKKIMDQGGLV. AMP-binding positions include threonine 73, arginine 78, 99 to 101, 128 to 131, and glutamine 135; these read GLV and GFPR. Positions 169–206 are LID; sequence GRLVHPASGRSYHKIFNPPKEAMKDDITGEPLVQRSDD. ATP contacts are provided by residues arginine 170 and 179 to 180; that span reads SY. Residues arginine 203 and arginine 214 each contribute to the AMP site. Residue glutamine 242 participates in ATP binding.

This sequence belongs to the adenylate kinase family. AK2 subfamily. As to quaternary structure, monomer.

It is found in the cytoplasm. Its subcellular location is the mitochondrion intermembrane space. It carries out the reaction AMP + ATP = 2 ADP. In terms of biological role, catalyzes the reversible transfer of the terminal phosphate group between ATP and AMP. Plays an important role in cellular energy homeostasis and in adenine nucleotide metabolism. Adenylate kinase activity is critical for regulation of the phosphate utilization and the AMP de novo biosynthesis pathways. The protein is Adenylate kinase (adk1) of Emericella nidulans (strain FGSC A4 / ATCC 38163 / CBS 112.46 / NRRL 194 / M139) (Aspergillus nidulans).